Here is a 158-residue protein sequence, read N- to C-terminus: Phosphopantetheine adenylyltransferase (158 aa).

Substrate is bound at residue Thr-10. ATP contacts are provided by residues 10–11 and His-18; that span reads TF. Lys-42, Leu-74, and Arg-88 together coordinate substrate. Residues 89 to 91, Glu-99, and 124 to 130 contribute to the ATP site; these read GLR and NSFISST.

It belongs to the bacterial CoaD family. Homohexamer. Mg(2+) serves as cofactor.

The protein localises to the cytoplasm. The enzyme catalyses (R)-4'-phosphopantetheine + ATP + H(+) = 3'-dephospho-CoA + diphosphate. It functions in the pathway cofactor biosynthesis; coenzyme A biosynthesis; CoA from (R)-pantothenate: step 4/5. In terms of biological role, reversibly transfers an adenylyl group from ATP to 4'-phosphopantetheine, yielding dephospho-CoA (dPCoA) and pyrophosphate. This is Phosphopantetheine adenylyltransferase from Shewanella sediminis (strain HAW-EB3).